The primary structure comprises 52 residues: ATP synthase F(1) complex subunit epsilon, mitochondrial (52 aa).

Residues Lys21, Lys32, and Lys37 each carry the N6-acetyllysine; alternate modification. Lys21, Lys32, and Lys37 each carry N6-succinyllysine; alternate. The residue at position 44 (Lys44) is an N6-acetyllysine.

The protein belongs to the eukaryotic ATPase epsilon family. Component of the ATP synthase complex composed at least of ATP5F1A/subunit alpha, ATP5F1B/subunit beta, ATP5MC1/subunit c (homooctomer), MT-ATP6/subunit a, MT-ATP8/subunit 8, ATP5ME/subunit e, ATP5MF/subunit f, ATP5MG/subunit g, ATP5MK/subunit k, ATP5MJ/subunit j, ATP5F1C/subunit gamma, ATP5F1D/subunit delta, ATP5F1E/subunit epsilon, ATP5PF/subunit F6, ATP5PB/subunit b, ATP5PD/subunit d, ATP5PO/subunit OSCP. ATP synthase complex consists of a soluble F(1) head domain (subunits alpha(3) and beta(3)) - the catalytic core - and a membrane F(0) domain - the membrane proton channel (subunits c, a, 8, e, f, g, k and j). These two domains are linked by a central stalk (subunits gamma, delta, and epsilon) rotating inside the F1 region and a stationary peripheral stalk (subunits F6, b, d, and OSCP).

The protein localises to the mitochondrion. It is found in the mitochondrion inner membrane. Subunit epsilon, of the mitochondrial membrane ATP synthase complex (F(1)F(0) ATP synthase or Complex V) that produces ATP from ADP in the presence of a proton gradient across the membrane which is generated by electron transport complexes of the respiratory chain. ATP synthase complex consist of a soluble F(1) head domain - the catalytic core - and a membrane F(1) domain - the membrane proton channel. These two domains are linked by a central stalk rotating inside the F(1) region and a stationary peripheral stalk. During catalysis, ATP synthesis in the catalytic domain of F(1) is coupled via a rotary mechanism of the central stalk subunits to proton translocation. In vivo, can only synthesize ATP although its ATP hydrolase activity can be activated artificially in vitro. May be essential for the assembly of F(1) and may play an important role in the incorporation of the hydrophobic subunit c into the F(1)-c oligomer rotor of the mitochondrial ATP synthase complex. This chain is ATP synthase F(1) complex subunit epsilon, mitochondrial, found in Mus musculus (Mouse).